Reading from the N-terminus, the 758-residue chain is 5-methyltetrahydropteroyltriglutamate--homocysteine methyltransferase (758 aa).

5-methyltetrahydropteroyltri-L-glutamate is bound by residues 16-19 (RELK) and Lys-116. Residues 436–438 (IGS) and Glu-489 contribute to the L-homocysteine site. Residues 436-438 (IGS) and Glu-489 contribute to the L-methionine site. Residues 520-521 (RC) and Trp-566 each bind 5-methyltetrahydropteroyltri-L-glutamate. Residue Asp-604 participates in L-homocysteine binding. L-methionine is bound at residue Asp-604. Glu-610 serves as a coordination point for 5-methyltetrahydropteroyltri-L-glutamate. 3 residues coordinate Zn(2+): His-646, Cys-648, and Glu-670. His-699 functions as the Proton donor in the catalytic mechanism. Cys-731 lines the Zn(2+) pocket.

It belongs to the vitamin-B12 independent methionine synthase family. Zn(2+) serves as cofactor.

The enzyme catalyses 5-methyltetrahydropteroyltri-L-glutamate + L-homocysteine = tetrahydropteroyltri-L-glutamate + L-methionine. The protein operates within amino-acid biosynthesis; L-methionine biosynthesis via de novo pathway; L-methionine from L-homocysteine (MetE route): step 1/1. Its function is as follows. Catalyzes the transfer of a methyl group from 5-methyltetrahydrofolate to homocysteine resulting in methionine formation. The chain is 5-methyltetrahydropteroyltriglutamate--homocysteine methyltransferase from Xylella fastidiosa (strain M12).